The chain runs to 379 residues: Oxidoreductase chry3 (379 aa).

Disordered stretches follow at residues 1–23 and 126–150; these read MTTA…QPTP and EGDD…TSHM. The segment covering 126–138 has biased composition (acidic residues); that stretch reads EGDDSAPAEEEAD.

The protein belongs to the asaB hydroxylase/desaturase family.

Its pathway is pigment biosynthesis. In terms of biological role, oxidoreductase; part of the gene cluster that mediates the biosynthesis of the yellow pigment chrysogine. Pyruvic acid and anthranilic acid are likely substrates for the nonribosomal peptide synthetase chry1/NRPS14, with pyruvic acid adenylated by the first A domain and anthranilic acid by the second. If pyruvic acid and anthranilic acid are merged and released from chry1/NRPS14 by hydrolysis, a subsequent amidation would lead to 2-pyruvoylaminobenzamide. This process is probably catalyzed by the amidotransferase chry2 using glutamine as amino donor. The dehydrogenase chry5 that has a terminal berberine bridge domain for C-N cyclization could catalyze the cyclization of 2-pyruvoylaminobenzamide to yield acetyl-4(3H)-quinazolidinone. A final reduction of acetyl-4(3H)-quinazolidinone catalyzed by the oxidoreductase chry4 would result in chrysogine. The polypeptide is Oxidoreductase chry3 (Gibberella zeae (strain ATCC MYA-4620 / CBS 123657 / FGSC 9075 / NRRL 31084 / PH-1) (Wheat head blight fungus)).